Consider the following 216-residue polypeptide: MDRKLENQKDLLNQDPKVELNSQSVAKNPLNSREVKPIQRRRPLRKNSRDKNSKPEFEERVIAIHRVVKVVKGGRRFSFSAFAVVGNKKGRVGFGHGKANEVQDAVKKAIKDAQNRLVSVPIYRKSTVPHEIAVKYLASKILIKPAPRGKGIVASNTVRAVVELAGYTDIYTKTYGSRTKINVVRATLKALLKLRTINQVAELRDLSPQQAQAQKV.

The tract at residues 1 to 55 (MDRKLENQKDLLNQDPKVELNSQSVAKNPLNSREVKPIQRRRPLRKNSRDKNSKP) is disordered. A compositionally biased stretch (polar residues) spans 20–31 (LNSQSVAKNPLN). Residues 57-120 (FEERVIAIHR…KDAQNRLVSV (64 aa)) form the S5 DRBM domain.

This sequence belongs to the universal ribosomal protein uS5 family. Part of the 30S ribosomal subunit. Contacts proteins S4 and S8.

Its function is as follows. With S4 and S12 plays an important role in translational accuracy. In terms of biological role, located at the back of the 30S subunit body where it stabilizes the conformation of the head with respect to the body. In Mesomycoplasma hyopneumoniae (strain J / ATCC 25934 / NCTC 10110) (Mycoplasma hyopneumoniae), this protein is Small ribosomal subunit protein uS5.